A 501-amino-acid polypeptide reads, in one-letter code: L-arabinose isomerase (501 aa).

Residues Glu306, Glu333, His350, and His449 each contribute to the Mn(2+) site.

Belongs to the arabinose isomerase family. Requires Mn(2+) as cofactor.

It catalyses the reaction beta-L-arabinopyranose = L-ribulose. It participates in carbohydrate degradation; L-arabinose degradation via L-ribulose; D-xylulose 5-phosphate from L-arabinose (bacterial route): step 1/3. Catalyzes the conversion of L-arabinose to L-ribulose. In Herpetosiphon aurantiacus (strain ATCC 23779 / DSM 785 / 114-95), this protein is L-arabinose isomerase.